A 514-amino-acid polypeptide reads, in one-letter code: Serine/threonine-protein kinase 33 (514 aa).

Over residues 65-86 (INRDITSRKDLPSRTSNVERKA) the composition is skewed to basic and acidic residues. The disordered stretch occupies residues 65-91 (INRDITSRKDLPSRTSNVERKASQQQW). In terms of domain architecture, Protein kinase spans 116–381 (YTFGRILGKG…AKELLDNQWL (266 aa)). Residues 122-130 (LGKGSFGIV) and Lys145 each bind ATP. Asp238 functions as the Proton acceptor in the catalytic mechanism. Disordered regions lie at residues 402–468 (KNNP…DMCS) and 485–514 (MEKTPVTPSQGTATKYPAKSGALSRTKKKL). Ser407 carries the phosphoserine modification. Basic and acidic residues predominate over residues 413–426 (TEEKNKPSTEEKLK). Over residues 449-468 (STAYEKQFPATSKDNFDMCS) the composition is skewed to polar residues.

It belongs to the protein kinase superfamily. CAMK Ser/Thr protein kinase family. CaMK subfamily. In terms of assembly, homodimer. Autophosphorylated. Highly expressed in testis, fetal lung and heart, followed by pituitary gland, kidney, interventricular septum, pancreas, heart, trachea, thyroid gland and uterus. Weak hybridization signals were observed in the following tissues: amygdala, aorta, esophagus, colon ascending, colon transverse, skeletal muscle, spleen, peripheral blood leukocyte, lymph node, bone marrow, placenta, prostate, liver, salivary gland, mammary gland, some tumor cell lines, fetal brain, fetal liver, fetal spleen and fetal thymus. No signal at all was detectable in RNA from tissues of the nervous system.

It localises to the cytoplasm. Its subcellular location is the cytoskeleton. It is found in the perinuclear region. The enzyme catalyses L-seryl-[protein] + ATP = O-phospho-L-seryl-[protein] + ADP + H(+). The catalysed reaction is L-threonyl-[protein] + ATP = O-phospho-L-threonyl-[protein] + ADP + H(+). Specifically inhibited by CDD-2807 ((3-([1,1'-Biphenyl]-2-ylethynyl)-1H-indazol-5-yl)(2,6-diazaspiro[3.5]nonan-2-yl)methanone). Functionally, serine/threonine protein kinase required for spermatid differentiation and male fertility. Promotes sperm flagella assembly during spermatogenesis by mediating phosphorylation of fibrous sheath proteins AKAP3 and AKAP4. Also phosphorylates vimentin/VIM, thereby regulating the dynamic behavior of the intermediate filament cytoskeleton. The polypeptide is Serine/threonine-protein kinase 33 (Homo sapiens (Human)).